The sequence spans 381 residues: L-lactate dehydrogenase A-like 6B (381 aa).

NAD(+)-binding positions include 101-106 (DVDEGR) and Arg-148. Residues Arg-155, Asn-187, and Arg-218 each coordinate substrate. Asn-187 is a binding site for NAD(+). Residue His-242 is the Proton acceptor of the active site. Thr-297 contacts substrate.

It belongs to the LDH/MDH superfamily. LDH family.

The catalysed reaction is (S)-lactate + NAD(+) = pyruvate + NADH + H(+). Its pathway is fermentation; pyruvate fermentation to lactate; (S)-lactate from pyruvate: step 1/1. In Bos taurus (Bovine), this protein is L-lactate dehydrogenase A-like 6B (LDHAL6B).